The chain runs to 393 residues: MHPIVIIGSGMAGYTLAREFRKLNPEHELVMICADDAVNYAKPTLSNALSGNKAPEQIPLGDAEKMSTQLKLQILSETWVKAINPETHELKLEKNGQETIQPYSKLVLAVGANPTRLAIAGDGSDDIHVVNSLIDYRAFRENLAKRQDKRVVILGAGLIGCEFANDLQHTGHQVTVIDLSPRPLGRLLPAHIADAFQKNLEESGIHFVLSTTVEKVSKINDGQDYAVTLANGQTLVADIVLSAIGLQPNIDLAKHAGVHTSRGILTNSLLETNLEDIYAIGDCAEVNGTLLPYVMPIMQQARALAKTLSGETTHVHYPAMPVAVKTPAAPLTVLPVPVDVDVNWETEEFEDGMLAKAIDNTDTLRGFVLLGATAGKQRLTLTKLVPDLIPAQL.

Residues 9 to 12 (SGMA), 33 to 34 (CA), Lys-42, Val-80, Glu-162, Asp-282, Val-294, and Lys-325 contribute to the FAD site.

It belongs to the FAD-dependent oxidoreductase family. In terms of assembly, homodimer. FAD serves as cofactor.

It is found in the cytoplasm. The catalysed reaction is 2 reduced [rubredoxin] + NAD(+) + H(+) = 2 oxidized [rubredoxin] + NADH. It functions in the pathway hydrocarbon metabolism; alkane degradation. In terms of biological role, involved in the hydrocarbon hydroxylating system, which transfers electrons from NADH to rubredoxin reductase and then through rubredoxin to alkane 1 monooxygenase. This Acinetobacter baylyi (strain ATCC 33305 / BD413 / ADP1) protein is Rubredoxin-NAD(+) reductase (rubB).